A 249-amino-acid polypeptide reads, in one-letter code: Small ribosomal subunit protein uS2 (249 aa).

This sequence belongs to the universal ribosomal protein uS2 family.

In Bordetella avium (strain 197N), this protein is Small ribosomal subunit protein uS2.